The chain runs to 126 residues: Aspartate 1-decarboxylase (126 aa).

The active-site Schiff-base intermediate with substrate; via pyruvic acid is the Ser25. Residue Ser25 is modified to Pyruvic acid (Ser). Thr57 provides a ligand contact to substrate. Tyr58 functions as the Proton donor in the catalytic mechanism. A substrate-binding site is contributed by 73–75; that stretch reads GGA.

This sequence belongs to the PanD family. In terms of assembly, heterooctamer of four alpha and four beta subunits. Pyruvate serves as cofactor. Post-translationally, is synthesized initially as an inactive proenzyme, which is activated by self-cleavage at a specific serine bond to produce a beta-subunit with a hydroxyl group at its C-terminus and an alpha-subunit with a pyruvoyl group at its N-terminus.

It localises to the cytoplasm. It carries out the reaction L-aspartate + H(+) = beta-alanine + CO2. It participates in cofactor biosynthesis; (R)-pantothenate biosynthesis; beta-alanine from L-aspartate: step 1/1. Its function is as follows. Catalyzes the pyruvoyl-dependent decarboxylation of aspartate to produce beta-alanine. In Xylella fastidiosa (strain Temecula1 / ATCC 700964), this protein is Aspartate 1-decarboxylase.